The sequence spans 919 residues: Periodic tryptophan protein 2 homolog (919 aa).

WD repeat units lie at residues 12 to 50 (GTVY…SDTL), 53 to 93 (ATRY…LHHF), 94 to 132 (HFKG…REFN), 142 to 181 (GPYD…NLIY), and 186 to 225 (GHKD…EGLR). Residues 238-267 (QREEEEEEEEDQEGDRETTIRGKATPAEEE) are disordered. A compositionally biased stretch (acidic residues) spans 240-251 (EEEEEEEEDQEG). The segment covering 252 to 267 (DRETTIRGKATPAEEE) has biased composition (basic and acidic residues). WD repeat units follow at residues 286-325 (GDFN…LIHS), 328-368 (ISDQ…YVLK), 371-410 (GHFN…CFVT), 413-452 (EHSS…NFRT), 456-498 (PRPT…DVLS), 499-538 (GHEG…RTKE), 541-580 (ALTS…QTGS), 603-642 (AKGK…LMKR), and 700-740 (KPEI…DPFE). The tract at residues 882–919 (TKRSLDPLGSEEEAEASEDDSLHLLGGGGRDSEEEMLA) is disordered. Over residues 890-900 (GSEEEAEASED) the composition is skewed to acidic residues. Ser898 and Ser902 each carry phosphoserine.

This sequence belongs to the WD repeat PWP2 family. Part of the small subunit (SSU) processome, composed of more than 70 proteins and the RNA chaperone small nucleolar RNA (snoRNA) U3.

It is found in the nucleus. The protein resides in the nucleolus. Its function is as follows. Part of the small subunit (SSU) processome, first precursor of the small eukaryotic ribosomal subunit. During the assembly of the SSU processome in the nucleolus, many ribosome biogenesis factors, an RNA chaperone and ribosomal proteins associate with the nascent pre-rRNA and work in concert to generate RNA folding, modifications, rearrangements and cleavage as well as targeted degradation of pre-ribosomal RNA by the RNA exosome. This chain is Periodic tryptophan protein 2 homolog, found in Homo sapiens (Human).